The following is a 590-amino-acid chain: Nuclear receptor subfamily 2 group C member 1 (590 aa).

The tract at residues 1–166 (MATIEEIAHQ…RLQRCIAFGM (166 aa)) is required for interaction with KAT2B. A DNA-binding region (nuclear receptor) is located at residues 98-173 (FDLCVVCGDK…FGMKQDSVQC (76 aa)). 2 NR C4-type zinc fingers span residues 101–121 (CVVCGDKASGRHYGAITCEGC) and 137–156 (CRGSKDCIINKHHRNRCQYC). Phosphoserine is present on residues S185 and S203. T208 is subject to Phosphothreonine. T210 is subject to Phosphothreonine; by MAPK1. Residue K238 forms a Glycyl lysine isopeptide (Lys-Gly) (interchain with G-Cter in SUMO); alternate linkage. Residue K238 forms a Glycyl lysine isopeptide (Lys-Gly) (interchain with G-Cter in SUMO2); alternate linkage. The NR LBD domain occupies 333–577 (ESMEGSTHLI…SVIPHILKME (245 aa)). A Phosphoserine; by PKC modification is found at S568. The interval 571–590 (PHILKMEPADYNSQIIGHSL) is required for interaction with NRIP1. K575 participates in a covalent cross-link: Glycyl lysine isopeptide (Lys-Gly) (interchain with G-Cter in SUMO2).

Belongs to the nuclear hormone receptor family. NR2 subfamily. As to quaternary structure, homodimer. Heterodimer; with NR2C2 which is required for chromatin remodeling and for binding to promoter regions such as globin DR1 repeats. Interacts with ESR1; the interaction prevents homodimerization of ESR1 and suppresses its transcriptional activity and cell growth. Interacts with NRIP1 (via its LXXLL motifs); the interaction provides corepressor activity. Interacts with HDAC3 (via the DNA-binding domain); the interaction recruits phosphorylated NR2C1 to PML bodies for sumoylation. Interacts with HDAC4 (via the DNA-binding domain). Interacts with PIAS1; the interaction is required for sumoylation of NR2C1. Interacts with UBE2I; the interaction is required for sumoylation of NR2C1. Interacts with KAT2B; the interaction acts as a corepressor of gene expression. Post-translationally, sumoylation requires both PIAS1 and UBE2I. Sumoylation appears to dissociate NR2C1 from the PML nuclear bodies. Enhances the interaction with NRIP1 but inhibits interaction with KAT2B. In proliferating cells, stimulation by all-trans retinoic acid, activation of MAPK1-mediated phosphorylation and recruitment to PML bodies with subsequent sumoylation, suppresses OCT4 expression. In terms of processing, phosphorylated on several serine and threonine residues. Phosphorylation on Thr-210, stimulated by all-trans retinoic acid (atRA) mediates PML location and sumoylation in proliferating cells which then modulates its association with effector molecules, KAT2B and NRIP1. Phosphorylation on Ser-568 by PKC is important for protein stability and function as activator of RARB.

It is found in the nucleus. It localises to the PML body. Its function is as follows. Orphan nuclear receptor. Binds the IR7 element in the promoter of its own gene in an autoregulatory negative feedback mechanism. Primarily repressor of a broad range of genes including ESR1 and RARB. Together with NR2C2, forms the core of the DRED (direct repeat erythroid-definitive) complex that represses embryonic and fetal globin transcription. Binds to hormone response elements (HREs) consisting of two 5'-AGGTCA-3' half site direct repeat consensus sequences. Also activator of OCT4 gene expression. Plays a fundamental role in early embryogenesis and regulates embryonic stem cell proliferation and differentiation. Mediator of retinoic acid-regulated preadipocyte proliferation. This is Nuclear receptor subfamily 2 group C member 1 (Nr2c1) from Rattus norvegicus (Rat).